A 337-amino-acid chain; its full sequence is MQIVEQMKDKALAELNLVKDKKTLDDIRVKYLGKKGELTEMMKLIATLPNDEKPKLGQAVNIAKQALQEAINLKLANFEEQELNEKLAQEKIDITLTGVGQNQGSLHPVTKTLNRIEAFFKQNGFAIEFGPEIESDYYNFETLNIPSHHPARAMHDTFYIDETHVLRTHTSGVQIRTMEKQQPPIRIIAPGRVYRCDSDITHTPMFHQVEGLLVDKDVSFADLKGLLHAFLNSFFEKDLKVRFRPSYFPFTEPSAEADIECVMCDGKGCRVCKHTGWLEVLGCGMVHPKVLKAGNIDSEKYQGFAFGMGVERLSMLRYGIDDLRMFFENDLRFLKQF.

Glutamate 252 lines the Mg(2+) pocket.

Belongs to the class-II aminoacyl-tRNA synthetase family. Phe-tRNA synthetase alpha subunit type 1 subfamily. In terms of assembly, tetramer of two alpha and two beta subunits. Mg(2+) is required as a cofactor.

Its subcellular location is the cytoplasm. The enzyme catalyses tRNA(Phe) + L-phenylalanine + ATP = L-phenylalanyl-tRNA(Phe) + AMP + diphosphate + H(+). This Francisella tularensis subsp. mediasiatica (strain FSC147) protein is Phenylalanine--tRNA ligase alpha subunit.